The primary structure comprises 161 residues: 4-hydroxybenzoyl-CoA reductase subunit gamma (161 aa).

One can recognise a 2Fe-2S ferredoxin-type domain in the interval 3–79; sequence NILRLTLNGR…GKKVETVESL (77 aa). [2Fe-2S] cluster is bound by residues C41, C46, C49, C61, C100, C103, C135, and C137.

As to quaternary structure, heterohexamer of two alpha, two beta and two gamma subunits. It depends on [2Fe-2S] cluster as a cofactor.

It carries out the reaction oxidized 2[4Fe-4S]-[ferredoxin] + benzoyl-CoA + H2O = 4-hydroxybenzoyl-CoA + reduced 2[4Fe-4S]-[ferredoxin] + 2 H(+). Its activity is regulated as follows. Inactivated by low concentrations of cyanide in vitro. Its function is as follows. Component of a complex that catalyzes the reductive dehydroxylation of 4-hydroxybenzoyl-CoA to benzoyl-CoA. Reaction is not reversible. Is a key enzyme in the anaerobic degradation of phenolic compounds. This chain is 4-hydroxybenzoyl-CoA reductase subunit gamma (hcrC), found in Thauera aromatica.